The sequence spans 111 residues: Fertilization-influencing membrane protein (111 aa).

A signal peptide spans 1–23 (MKLWLWVAVGVWMLMAELGTIET). A helical transmembrane segment spans residues 85–105 (ILVGTLVVAFFFLLFQFCLHV).

As to expression, testis-specific.

The protein resides in the cell membrane. The protein localises to the secreted. In terms of biological role, plays a role in sperm-oocyte fusion process during fertilization. The sequence is that of Fertilization-influencing membrane protein from Mus musculus (Mouse).